A 117-amino-acid polypeptide reads, in one-letter code: UPF0295 protein GTNG_0491 (117 aa).

Transmembrane regions (helical) follow at residues isoleucine 12–phenylalanine 32 and leucine 42–glycine 62.

Belongs to the UPF0295 family.

The protein localises to the cell membrane. This chain is UPF0295 protein GTNG_0491, found in Geobacillus thermodenitrificans (strain NG80-2).